Reading from the N-terminus, the 301-residue chain is Probable 5-dehydro-4-deoxyglucarate dehydratase (301 aa).

This sequence belongs to the DapA family.

It catalyses the reaction 5-dehydro-4-deoxy-D-glucarate + H(+) = 2,5-dioxopentanoate + CO2 + H2O. It participates in carbohydrate acid metabolism; D-glucarate degradation; 2,5-dioxopentanoate from D-glucarate: step 2/2. The protein is Probable 5-dehydro-4-deoxyglucarate dehydratase of Rhizobium meliloti (strain 1021) (Ensifer meliloti).